Consider the following 61-residue polypeptide: Small ribosomal subunit protein uS14B (61 aa).

Zn(2+) contacts are provided by C24, C27, C40, and C43.

It belongs to the universal ribosomal protein uS14 family. Zinc-binding uS14 subfamily. In terms of assembly, part of the 30S ribosomal subunit. Contacts proteins S3 and S10. Requires Zn(2+) as cofactor.

In terms of biological role, binds 16S rRNA, required for the assembly of 30S particles and may also be responsible for determining the conformation of the 16S rRNA at the A site. In Staphylococcus saprophyticus subsp. saprophyticus (strain ATCC 15305 / DSM 20229 / NCIMB 8711 / NCTC 7292 / S-41), this protein is Small ribosomal subunit protein uS14B.